We begin with the raw amino-acid sequence, 325 residues long: Taste receptor type 2 member 7 (325 aa).

The Extracellular segment spans residues 1–9 (MADKVQTTL). The chain crosses the membrane as a helical span at residues 10-30 (LFLAVGEFSVGILGNAFIGLV). At 31-55 (NCMDWVKKRKIASIDLILTSLAISR) the chain is on the cytoplasmic side. Residues 56–76 (ICLLCVILLDCFILVLYPDVY) form a helical membrane-spanning segment. Over 77-94 (ATGKEMRIIDFFWTLTNH) the chain is Extracellular. The chain crosses the membrane as a helical span at residues 95-115 (LSIWFATCLSIYYFFRIANFF). Residues 116–128 (HPLFLWMKWRIDR) lie on the Cytoplasmic side of the membrane. A helical transmembrane segment spans residues 129-149 (VISWILLGCVVLSVFISLPAT). Topologically, residues 150–187 (ENLNADFRFCVKAKRKTNLTWSCRVNKTQHASTKLFLN) are extracellular. Asparagine 167 and asparagine 175 each carry an N-linked (GlcNAc...) asparagine glycan. The helical transmembrane segment at 188-208 (LATLLPFCVCLMSFFLLILSL) threads the bilayer. The Cytoplasmic segment spans residues 209-235 (RRHIRRMQLSATGCRDPSTEAHVRALK). The helical transmembrane segment at 236–256 (AVISFLLLFIAYYLSFLVATS) threads the bilayer. Residues 257–266 (SYFMPETELA) lie on the Extracellular side of the membrane. Residues 267 to 287 (VIFGESIALIYPSSHSFILIL) form a helical membrane-spanning segment. At 288 to 319 (GNNKLRHASLKVIWKVMSILKGRKFQQHKQIG) the chain is on the cytoplasmic side.

The protein belongs to the G-protein coupled receptor T2R family.

It is found in the membrane. In terms of biological role, gustducin-coupled receptor implicated in the perception of bitter compounds in the oral cavity and the gastrointestinal tract. Signals through PLCB2 and the calcium-regulated cation channel TRPM5. The chain is Taste receptor type 2 member 7 (TAS2R7) from Pan paniscus (Pygmy chimpanzee).